The chain runs to 449 residues: UDP-N-acetylmuramate--L-alanine ligase (449 aa).

Residue 110 to 116 (GTHGKTT) participates in ATP binding.

The protein belongs to the MurCDEF family.

The protein localises to the cytoplasm. The enzyme catalyses UDP-N-acetyl-alpha-D-muramate + L-alanine + ATP = UDP-N-acetyl-alpha-D-muramoyl-L-alanine + ADP + phosphate + H(+). Its pathway is cell wall biogenesis; peptidoglycan biosynthesis. In terms of biological role, cell wall formation. This Desulfitobacterium hafniense (strain Y51) protein is UDP-N-acetylmuramate--L-alanine ligase.